The sequence spans 325 residues: Ribose-phosphate pyrophosphokinase 4 (325 aa).

Mg(2+) is bound by residues aspartate 145 and histidine 147. The tract at residues 228–243 is binding of phosphoribosylpyrophosphate; sequence GRHVVIVDDLVQSGGT.

This sequence belongs to the ribose-phosphate pyrophosphokinase family. Mg(2+) is required as a cofactor.

It carries out the reaction D-ribose 5-phosphate + ATP = 5-phospho-alpha-D-ribose 1-diphosphate + AMP + H(+). The polypeptide is Ribose-phosphate pyrophosphokinase 4 (Oryza sativa subsp. japonica (Rice)).